Reading from the N-terminus, the 375-residue chain is Protein SSUH2 homolog (375 aa).

Expressed in enterocytes of small and large intestinal mucosa (at protein level). Expressed in chromaffine and interstitial cells. Expressed in peripheral blood and gingival cells.

It is found in the cytoplasm. It localises to the nucleus. Functionally, plays a role in odontogenesis. This is Protein SSUH2 homolog from Homo sapiens (Human).